We begin with the raw amino-acid sequence, 374 residues long: Probable inactive patatin-3-Kuras 1 (374 aa).

The first 11 residues, 1 to 11, serve as a signal peptide directing secretion; the sequence is MMLATTSSTFA. In terms of domain architecture, PNPLA spans 20-217; it reads LSIDGGGIKG…AAVDPSLLSI (198 aa). Positions 24 to 29 match the GXGXXG motif; sequence GGGIKG. N-linked (GlcNAc...) asparagine glycans are attached at residues Asn48 and Asn191. The active-site Proton acceptor is the Asp204. N-linked (GlcNAc...) asparagine glycosylation is present at Asn257.

It belongs to the patatin family. In terms of processing, N-glycosylated. As to expression, tuber.

It localises to the vacuole. The protein is Probable inactive patatin-3-Kuras 1 (pat3-k1) of Solanum tuberosum (Potato).